The following is a 302-amino-acid chain: MTQAATLSPTPFGRVVTAMVTPFDASGAVDLSVAANLARHLVEQGSDGLLVCGTTGESPTLSWDEQLQLLQAVRDAVGSDAKVLAGTGSNSTAEAVEATKEAAAAGADGALVVVPYYNKPPQEGLEAHFRAIAEAAPELPLMLYNIPGRTGCSIAPATVARLMDCPNVVSFKAASGTTEEVTALRLACGPQLAIYSGDDGLTLPMLAVGAVGVVSVGSHVAGPEIRAMIEAYLNGDGASALALHDALIPLFKALFATTNPIPVKAALELNGWSVGAPRPPLCSLSDDMKRSLSNAMAALRQT.

Thr-55 is a binding site for pyruvate. The active-site Proton donor/acceptor is Tyr-144. Catalysis depends on Lys-172, which acts as the Schiff-base intermediate with substrate. A pyruvate-binding site is contributed by Val-214.

Belongs to the DapA family. In terms of assembly, homotetramer; dimer of dimers.

Its subcellular location is the cytoplasm. It catalyses the reaction L-aspartate 4-semialdehyde + pyruvate = (2S,4S)-4-hydroxy-2,3,4,5-tetrahydrodipicolinate + H2O + H(+). It participates in amino-acid biosynthesis; L-lysine biosynthesis via DAP pathway; (S)-tetrahydrodipicolinate from L-aspartate: step 3/4. Its function is as follows. Catalyzes the condensation of (S)-aspartate-beta-semialdehyde [(S)-ASA] and pyruvate to 4-hydroxy-tetrahydrodipicolinate (HTPA). The polypeptide is 4-hydroxy-tetrahydrodipicolinate synthase (Synechococcus sp. (strain CC9605)).